The primary structure comprises 208 residues: Small ribosomal subunit protein uS4B (208 aa).

The S4 RNA-binding domain occupies 95–160 (KRLDNVVFRL…NQVYMAAKQA (66 aa)).

Belongs to the universal ribosomal protein uS4 family. As to quaternary structure, part of the 30S ribosomal subunit. Contacts protein S5. The interaction surface between S4 and S5 is involved in control of translational fidelity.

Functionally, one of the primary rRNA binding proteins, it binds directly to 16S rRNA where it nucleates assembly of the body of the 30S subunit. Its function is as follows. With S5 and S12 plays an important role in translational accuracy. The chain is Small ribosomal subunit protein uS4B from Bdellovibrio bacteriovorus (strain ATCC 15356 / DSM 50701 / NCIMB 9529 / HD100).